The sequence spans 183 residues: NAD(P)H-quinone oxidoreductase subunit I, chloroplastic (183 aa).

4Fe-4S ferredoxin-type domains lie at Gly-55 to Glu-84 and Thr-95 to Glu-124. Residues Cys-64, Cys-67, Cys-70, Cys-74, Cys-104, Cys-107, Cys-110, and Cys-114 each contribute to the [4Fe-4S] cluster site.

It belongs to the complex I 23 kDa subunit family. As to quaternary structure, NDH is composed of at least 16 different subunits, 5 of which are encoded in the nucleus. [4Fe-4S] cluster serves as cofactor.

The protein localises to the plastid. It is found in the chloroplast thylakoid membrane. It carries out the reaction a plastoquinone + NADH + (n+1) H(+)(in) = a plastoquinol + NAD(+) + n H(+)(out). The catalysed reaction is a plastoquinone + NADPH + (n+1) H(+)(in) = a plastoquinol + NADP(+) + n H(+)(out). Functionally, NDH shuttles electrons from NAD(P)H:plastoquinone, via FMN and iron-sulfur (Fe-S) centers, to quinones in the photosynthetic chain and possibly in a chloroplast respiratory chain. The immediate electron acceptor for the enzyme in this species is believed to be plastoquinone. Couples the redox reaction to proton translocation, and thus conserves the redox energy in a proton gradient. The chain is NAD(P)H-quinone oxidoreductase subunit I, chloroplastic from Huperzia lucidula (Shining clubmoss).